Here is a 247-residue protein sequence, read N- to C-terminus: Proteasome subunit alpha (247 aa).

This sequence belongs to the peptidase T1A family. In terms of assembly, the 20S proteasome core is composed of 14 alpha and 14 beta subunits that assemble into four stacked heptameric rings, resulting in a barrel-shaped structure. The two inner rings, each composed of seven catalytic beta subunits, are sandwiched by two outer rings, each composed of seven alpha subunits. The catalytic chamber with the active sites is on the inside of the barrel. Has a gated structure, the ends of the cylinder being occluded by the N-termini of the alpha-subunits. Is capped at one or both ends by the proteasome regulatory ATPase, PAN.

Its subcellular location is the cytoplasm. The formation of the proteasomal ATPase PAN-20S proteasome complex, via the docking of the C-termini of PAN into the intersubunit pockets in the alpha-rings, triggers opening of the gate for substrate entry. Interconversion between the open-gate and close-gate conformations leads to a dynamic regulation of the 20S proteasome proteolysis activity. In terms of biological role, component of the proteasome core, a large protease complex with broad specificity involved in protein degradation. The chain is Proteasome subunit alpha from Methanosarcina thermophila.